The following is a 237-amino-acid chain: ATP synthase subunit a (237 aa).

5 helical membrane-spanning segments follow: residues 17–37 (LSDM…AVAA), 75–95 (FLTL…LGLP), 112–132 (DATV…YYGV), 179–201 (ILLG…GAAI), and 214–234 (GTIQ…HKVS).

Belongs to the ATPase A chain family. In terms of assembly, F-type ATPases have 2 components, CF(1) - the catalytic core - and CF(0) - the membrane proton channel. CF(1) has five subunits: alpha(3), beta(3), gamma(1), delta(1), epsilon(1). CF(0) has three main subunits: a(1), b(2) and c(9-12). The alpha and beta chains form an alternating ring which encloses part of the gamma chain. CF(1) is attached to CF(0) by a central stalk formed by the gamma and epsilon chains, while a peripheral stalk is formed by the delta and b chains.

It localises to the cell membrane. Functionally, key component of the proton channel; it plays a direct role in the translocation of protons across the membrane. This Geobacillus kaustophilus (strain HTA426) protein is ATP synthase subunit a.